A 575-amino-acid polypeptide reads, in one-letter code: Lysine--tRNA ligase (575 aa).

Mg(2+) contacts are provided by E412 and E419.

The protein belongs to the class-II aminoacyl-tRNA synthetase family. In terms of assembly, homodimer. Mg(2+) serves as cofactor.

It localises to the cytoplasm. The enzyme catalyses tRNA(Lys) + L-lysine + ATP = L-lysyl-tRNA(Lys) + AMP + diphosphate. This Bacteroides fragilis (strain YCH46) protein is Lysine--tRNA ligase.